The following is a 237-amino-acid chain: Isoprenyl transferase (237 aa).

Aspartate 14 is an active-site residue. Aspartate 14 lines the Mg(2+) pocket. Substrate contacts are provided by residues 15–18 (GNGR), tryptophan 19, arginine 27, histidine 31, and 59–61 (STE). The Proton acceptor role is filled by asparagine 62. Residues tryptophan 63, arginine 65, arginine 184, and 190-192 (RIS) each bind substrate. Glutamate 203 contributes to the Mg(2+) binding site.

Belongs to the UPP synthase family. As to quaternary structure, homodimer. Mg(2+) serves as cofactor.

Functionally, catalyzes the condensation of isopentenyl diphosphate (IPP) with allylic pyrophosphates generating different type of terpenoids. The chain is Isoprenyl transferase from Helicobacter hepaticus (strain ATCC 51449 / 3B1).